Reading from the N-terminus, the 415-residue chain is Gamma-glutamyl phosphate reductase (415 aa).

This sequence belongs to the gamma-glutamyl phosphate reductase family.

It is found in the cytoplasm. It carries out the reaction L-glutamate 5-semialdehyde + phosphate + NADP(+) = L-glutamyl 5-phosphate + NADPH + H(+). Its pathway is amino-acid biosynthesis; L-proline biosynthesis; L-glutamate 5-semialdehyde from L-glutamate: step 2/2. Its function is as follows. Catalyzes the NADPH-dependent reduction of L-glutamate 5-phosphate into L-glutamate 5-semialdehyde and phosphate. The product spontaneously undergoes cyclization to form 1-pyrroline-5-carboxylate. The protein is Gamma-glutamyl phosphate reductase of Mycolicibacterium gilvum (strain PYR-GCK) (Mycobacterium gilvum (strain PYR-GCK)).